The following is a 2961-amino-acid chain: Zinc finger ZZ-type and EF-hand domain-containing protein 1 (2961 aa).

The tract at residues 1 to 41 (MGNAPSHSSEDEAAAAGGEGWGPHQDWAAVSGTTPGPGVAA) is disordered. Glycine 2 carries N-myristoyl glycine lipidation. The 36-residue stretch at 111–146 (CSSEQFEEAFAQFDAEGDGTVDAENMLEALKNSSGA) folds into the EF-hand domain. The 180-residue stretch at 226–405 (LVQKEKESPG…AIWYWSLLTS (180 aa)) folds into the DOC domain. Phosphoserine is present on residues serine 240, serine 1475, serine 1488, and serine 1509. The segment at 1446-1531 (TADETSHLQP…PTRRPPFTRG (86 aa)) is disordered. Polar residues predominate over residues 1485 to 1502 (GDQSPGLGTQPKLPSSSG). A Phosphothreonine modification is found at threonine 1512. Over residues 1516 to 1531 (PLSPSTPTRRPPFTRG) the composition is skewed to low complexity. Serine 1518 is modified (phosphoserine). Phosphothreonine is present on residues threonine 1521 and threonine 1523. Phosphoserine occurs at positions 1537 and 1540. ZZ-type zinc fingers lie at residues 1778 to 1833 (NVDI…FTCD) and 1827 to 1882 (NMEF…MVTI). Zn(2+) is bound by residues cysteine 1783, cysteine 1786, cysteine 1797, cysteine 1800, cysteine 1806, cysteine 1809, histidine 1819, histidine 1823, cysteine 1832, cysteine 1835, cysteine 1846, cysteine 1849, cysteine 1855, cysteine 1858, histidine 1868, and histidine 1872. Disordered regions lie at residues 1994–2078 (AVQG…PSPE) and 2426–2455 (LELD…KLDP). Basic and acidic residues predominate over residues 2009–2027 (AVHEEIRPVDFKQRNKADK). Residues 2033-2043 (KDPSCQTQISD) show a composition bias toward polar residues. Residues 2426-2440 (LELDERGDREEEVER) show a composition bias toward basic and acidic residues. The residue at position 2444 (serine 2444) is a Phosphoserine. At lysine 2667 the chain carries N6-acetyllysine.

Interacts with KLF6 and KLF9. Interacts via (ZZ-type 2 zinc finger) with histone H3 trimethylated at 'Lys-4' (H3K4me3) and histone H3 acetylated at 'Lys-4' (H3K4ac). Expressed at low levels in cerebellum.

Functionally, histone H3 reader which may act as a transcriptional coactivator for KLF6 and KLF9 transcription factors. This is Zinc finger ZZ-type and EF-hand domain-containing protein 1 from Homo sapiens (Human).